A 403-amino-acid chain; its full sequence is SEC14-like protein 4 (403 aa).

The region spanning 76 to 249 is the CRAL-TRIO domain; it reads APEVIQLYDS…EFGGTMTDPD (174 aa). Residues 275-383 form the GOLD domain; sequence RPQYEHSVVV…TKKVGYTAEV (109 aa).

In terms of biological role, probable hydrophobic ligand-binding protein; may play a role in the transport of hydrophobic ligands like tocopherol, squalene and phospholipids. The protein is SEC14-like protein 4 (Sec14l4) of Mus musculus (Mouse).